Reading from the N-terminus, the 290-residue chain is 4-hydroxybenzoate octaprenyltransferase (290 aa).

8 consecutive transmembrane segments (helical) span residues 23-43, 46-66, 99-119, 141-161, 163-183, 213-233, 234-254, and 268-288; these read IGALLLLWPTLWALWVATPGV, LWILAVFVAGVWLMRAAGCVV, LFVVLVLISFLLVLTLNTMTI, LPQVVLGAAFGWSIPMAFAAV, ESVPLSCWLMFLANILWAVAY, LIIGIFQIGVLALMAIIGELN, GLGWGYYWSILVAGALFVYQQ, and AFMNNNYVGLVLFLGLAMSYW.

The protein belongs to the UbiA prenyltransferase family. Requires Mg(2+) as cofactor.

The protein resides in the cell inner membrane. It carries out the reaction all-trans-octaprenyl diphosphate + 4-hydroxybenzoate = 4-hydroxy-3-(all-trans-octaprenyl)benzoate + diphosphate. It functions in the pathway cofactor biosynthesis; ubiquinone biosynthesis. Its function is as follows. Catalyzes the prenylation of para-hydroxybenzoate (PHB) with an all-trans polyprenyl group. Mediates the second step in the final reaction sequence of ubiquinone-8 (UQ-8) biosynthesis, which is the condensation of the polyisoprenoid side chain with PHB, generating the first membrane-bound Q intermediate 3-octaprenyl-4-hydroxybenzoate. In Escherichia coli (strain UTI89 / UPEC), this protein is 4-hydroxybenzoate octaprenyltransferase.